We begin with the raw amino-acid sequence, 59 residues long: U-actitoxin-Aer2a (59 aa).

Post-translationally, contains 5 disulfide bonds.

It is found in the secreted. It localises to the nematocyst. This Anemonia erythraea (Sea anemone) protein is U-actitoxin-Aer2a.